Reading from the N-terminus, the 368-residue chain is Histidinol-phosphate aminotransferase (368 aa).

The residue at position 215 (K215) is an N6-(pyridoxal phosphate)lysine.

Belongs to the class-II pyridoxal-phosphate-dependent aminotransferase family. Histidinol-phosphate aminotransferase subfamily. As to quaternary structure, homodimer. It depends on pyridoxal 5'-phosphate as a cofactor.

The enzyme catalyses L-histidinol phosphate + 2-oxoglutarate = 3-(imidazol-4-yl)-2-oxopropyl phosphate + L-glutamate. Its pathway is amino-acid biosynthesis; L-histidine biosynthesis; L-histidine from 5-phospho-alpha-D-ribose 1-diphosphate: step 7/9. In Buchnera aphidicola subsp. Acyrthosiphon pisum (strain 5A), this protein is Histidinol-phosphate aminotransferase.